The following is a 280-amino-acid chain: ATP synthase gamma chain (280 aa).

It belongs to the ATPase gamma chain family. In terms of assembly, F-type ATPases have 2 components, CF(1) - the catalytic core - and CF(0) - the membrane proton channel. CF(1) has five subunits: alpha(3), beta(3), gamma(1), delta(1), epsilon(1). CF(0) has three main subunits: a, b and c.

The protein resides in the cell membrane. In terms of biological role, produces ATP from ADP in the presence of a proton gradient across the membrane. The gamma chain is believed to be important in regulating ATPase activity and the flow of protons through the CF(0) complex. The protein is ATP synthase gamma chain of Mycoplasma capricolum subsp. capricolum (strain California kid / ATCC 27343 / NCTC 10154).